Consider the following 637-residue polypeptide: MNANPKFLSATATVDEAAIQPLPNSTKIYIQGSRPDIRVPMRKITQSDTAASFGFEKNPAIYVYDTSGPYTDPEAKIDIRSGLDTPRLPWILERQDTEELPGPTSEYGIERLNDPKLAELRFNLHRKPRRALAGKNVSQMHYARQGIITPEMEFVAIRENMNRRAYLEELKQSGPKGEKLAELMGRQHPGQSFGAAIPQEITAEFVRSEIARGRAIIPANINHPEIEPMIIGRNFLVKINANIGNSAVTSSIGEEVEKMTWAIRWGGDNVMDLSTGKHIHETREWIIRNSPVPIGTVPIYQALEKVNGKAEDLTWEIFRDTLIEQAEQGVDYFTIHAGVLLRYVPMTAKRMTGIVSRGGSIMAKWCLAHHKESFLYEHFEDICEIMKAYDVSFSLGDGLRPGSIYDANDEAQLGELKTLGELTQIAWKHDVQVMIEGPGHVPMHLIKENMDLQLEQCHEAPFYTLGPLTTDIAPGYDHITSGIGAAQIGWYGTAMLCYVTPKEHLGLPNKVDVKDGIITYKIAAHAADLAKGHIGAQIRDNALSKARFEFRWDDQFNIGLDPDKAREFHDETLPKDSAKVAHFCSMCGPHFCSMKITQEVREYAAKQGITEIQALKKGMEVKAIEFVKSGSEIYQKQ.

Substrate contacts are provided by residues asparagine 242, methionine 271, tyrosine 300, histidine 336, serine 356–glycine 358, aspartate 397–arginine 400, and glutamate 436. Zn(2+) is bound at residue histidine 440. Residue tyrosine 463 participates in substrate binding. Residue histidine 504 coordinates Zn(2+). [4Fe-4S] cluster-binding residues include cysteine 584, cysteine 587, and cysteine 592.

Belongs to the ThiC family. Homodimer. The cofactor is [4Fe-4S] cluster.

It carries out the reaction 5-amino-1-(5-phospho-beta-D-ribosyl)imidazole + S-adenosyl-L-methionine = 4-amino-2-methyl-5-(phosphooxymethyl)pyrimidine + CO + 5'-deoxyadenosine + formate + L-methionine + 3 H(+). The protein operates within cofactor biosynthesis; thiamine diphosphate biosynthesis. In terms of biological role, catalyzes the synthesis of the hydroxymethylpyrimidine phosphate (HMP-P) moiety of thiamine from aminoimidazole ribotide (AIR) in a radical S-adenosyl-L-methionine (SAM)-dependent reaction. The protein is Phosphomethylpyrimidine synthase of Herminiimonas arsenicoxydans.